The sequence spans 259 residues: NAD(P)H-quinone oxidoreductase subunit K 2 (259 aa).

[4Fe-4S] cluster is bound by residues cysteine 52, cysteine 53, cysteine 117, and cysteine 148.

Belongs to the complex I 20 kDa subunit family. In terms of assembly, NDH-1 can be composed of about 15 different subunits; different subcomplexes with different compositions have been identified which probably have different functions. [4Fe-4S] cluster is required as a cofactor.

Its subcellular location is the cellular thylakoid membrane. The enzyme catalyses a plastoquinone + NADH + (n+1) H(+)(in) = a plastoquinol + NAD(+) + n H(+)(out). The catalysed reaction is a plastoquinone + NADPH + (n+1) H(+)(in) = a plastoquinol + NADP(+) + n H(+)(out). In terms of biological role, NDH-1 shuttles electrons from an unknown electron donor, via FMN and iron-sulfur (Fe-S) centers, to quinones in the respiratory and/or the photosynthetic chain. The immediate electron acceptor for the enzyme in this species is believed to be plastoquinone. Couples the redox reaction to proton translocation, and thus conserves the redox energy in a proton gradient. Cyanobacterial NDH-1 also plays a role in inorganic carbon-concentration. This Cyanothece sp. (strain PCC 7425 / ATCC 29141) protein is NAD(P)H-quinone oxidoreductase subunit K 2 (ndhK2).